The following is a 424-amino-acid chain: Glutamyl-tRNA(Gln) amidotransferase subunit D (424 aa).

The interval 58-79 (NTNGGLNGGKEHKTAGEEVQKS) is disordered. Residues 66-78 (GKEHKTAGEEVQK) show a composition bias toward basic and acidic residues. The region spanning 84–406 (PKVAILSTGG…LGQTDEFNEA (323 aa)) is the Asparaginase/glutaminase domain. Catalysis depends on residues Thr94, Thr170, Asp171, and Lys247.

It belongs to the asparaginase 1 family. GatD subfamily. As to quaternary structure, heterodimer of GatD and GatE.

It catalyses the reaction L-glutamyl-tRNA(Gln) + L-glutamine + ATP + H2O = L-glutaminyl-tRNA(Gln) + L-glutamate + ADP + phosphate + H(+). Functionally, allows the formation of correctly charged Gln-tRNA(Gln) through the transamidation of misacylated Glu-tRNA(Gln) in organisms which lack glutaminyl-tRNA synthetase. The reaction takes place in the presence of glutamine and ATP through an activated gamma-phospho-Glu-tRNA(Gln). The GatDE system is specific for glutamate and does not act on aspartate. In Methanosarcina barkeri (strain Fusaro / DSM 804), this protein is Glutamyl-tRNA(Gln) amidotransferase subunit D.